A 122-amino-acid polypeptide reads, in one-letter code: Large ribosomal subunit protein uL14 (122 aa).

Belongs to the universal ribosomal protein uL14 family. In terms of assembly, part of the 50S ribosomal subunit. Forms a cluster with proteins L3 and L19. In the 70S ribosome, L14 and L19 interact and together make contacts with the 16S rRNA in bridges B5 and B8.

Its function is as follows. Binds to 23S rRNA. Forms part of two intersubunit bridges in the 70S ribosome. This is Large ribosomal subunit protein uL14 from Chlamydia caviae (strain ATCC VR-813 / DSM 19441 / 03DC25 / GPIC) (Chlamydophila caviae).